A 219-amino-acid chain; its full sequence is Ribose-5-phosphate isomerase A (219 aa).

Substrate-binding positions include 28–31 (SGST), 81–84 (DGAD), and 94–97 (KGGG). E103 functions as the Proton acceptor in the catalytic mechanism. K121 lines the substrate pocket.

Belongs to the ribose 5-phosphate isomerase family. Homodimer.

It catalyses the reaction aldehydo-D-ribose 5-phosphate = D-ribulose 5-phosphate. It functions in the pathway carbohydrate degradation; pentose phosphate pathway; D-ribose 5-phosphate from D-ribulose 5-phosphate (non-oxidative stage): step 1/1. Catalyzes the reversible conversion of ribose-5-phosphate to ribulose 5-phosphate. This chain is Ribose-5-phosphate isomerase A, found in Mannheimia succiniciproducens (strain KCTC 0769BP / MBEL55E).